The primary structure comprises 444 residues: N-succinylarginine dihydrolase (444 aa).

Substrate-binding positions include 19–28 (AGLSFGNVAS), asparagine 110, and 137–138 (HR). Glutamate 174 is a catalytic residue. Arginine 214 provides a ligand contact to substrate. Residue histidine 250 is part of the active site. 2 residues coordinate substrate: aspartate 252 and asparagine 362. Cysteine 368 acts as the Nucleophile in catalysis.

The protein belongs to the succinylarginine dihydrolase family. As to quaternary structure, homodimer.

It catalyses the reaction N(2)-succinyl-L-arginine + 2 H2O + 2 H(+) = N(2)-succinyl-L-ornithine + 2 NH4(+) + CO2. It functions in the pathway amino-acid degradation; L-arginine degradation via AST pathway; L-glutamate and succinate from L-arginine: step 2/5. In terms of biological role, catalyzes the hydrolysis of N(2)-succinylarginine into N(2)-succinylornithine, ammonia and CO(2). This is N-succinylarginine dihydrolase from Shewanella oneidensis (strain ATCC 700550 / JCM 31522 / CIP 106686 / LMG 19005 / NCIMB 14063 / MR-1).